We begin with the raw amino-acid sequence, 1178 residues long: Dual specificity mitogen-activated protein kinase kinase hemipterous (1178 aa).

Disordered stretches follow at residues 74–103 (SGSG…SSSS) and 115–148 (ATGT…GGGL). Composition is skewed to low complexity over residues 91–103 (ATPF…SSSS) and 115–128 (ATGT…PPTT). The Protein kinase domain maps to 197–456 (LKHLGDLGNG…YPELLAQPFI (260 aa)). Residues 203–211 (LGNGTSGNV) and K226 each bind ATP. D320 functions as the Proton acceptor in the catalytic mechanism. S348 is subject to Phosphoserine. T352 is modified (phosphothreonine). Residues 522 to 648 (TYAGQSPTNP…DESPKKESMF (127 aa)) form a disordered region. Residues 523–543 (YAGQSPTNPQKTIKPTQIPSY) show a composition bias toward polar residues. A compositionally biased stretch (low complexity) spans 544–570 (QQQQSQFFMQSATQLPQTTTTTPTATT). The segment covering 574–593 (GGSGNGNGRGNGSGGSGNGS) has biased composition (gly residues). Over residues 594–608 (GSSSSASPLSPPSAG) the composition is skewed to low complexity. The span at 636–646 (KYNDESPKKES) shows a compositional bias: basic and acidic residues. Phosphoserine occurs at positions 646 and 662. Disordered regions lie at residues 715 to 783 (TTTP…LQPG), 797 to 851 (QNQL…STCS), 912 to 933 (GTSP…GNGN), 999 to 1026 (TSPV…VVNN), 1042 to 1108 (SSSS…NRGQ), and 1122 to 1178 (GQPP…TIDQ). The span at 724 to 734 (TENSQAYDSCD) shows a compositional bias: polar residues. Composition is skewed to low complexity over residues 735 to 783 (SSSN…LQPG), 808 to 817 (RYQQQRQQPP), and 837 to 851 (THST…STCS). The span at 912 to 928 (GTSPTLQSRSPEQQSDY) shows a compositional bias: polar residues. A compositionally biased stretch (low complexity) spans 1042–1055 (SSSSNTSQSTSPTT). Residues S1150 and S1154 each carry the phosphoserine modification. Basic and acidic residues predominate over residues 1168–1178 (PQRRIYRTIDQ).

This sequence belongs to the protein kinase superfamily. STE Ser/Thr protein kinase family. MAP kinase kinase subfamily. MAPKK is itself dependent on Ser/Thr phosphorylation for activity catalyzed by MAP kinase kinase kinases. In terms of processing, weakly autophosphorylated.

The enzyme catalyses L-seryl-[protein] + ATP = O-phospho-L-seryl-[protein] + ADP + H(+). The catalysed reaction is L-threonyl-[protein] + ATP = O-phospho-L-threonyl-[protein] + ADP + H(+). It catalyses the reaction L-tyrosyl-[protein] + ATP = O-phospho-L-tyrosyl-[protein] + ADP + H(+). Required for the epithelial cell sheet movement called dorsal closure (DC), which allows establishment of the dorsal epidermis. Controls the expression in the dorsal epithelium edges of another dorsal closure gene, puckered (puc). Phosphorylates and activates the MAP kinase bsk; bsk signal transduction pathway mediates an immune response and morphogenesis. In Drosophila melanogaster (Fruit fly), this protein is Dual specificity mitogen-activated protein kinase kinase hemipterous (hep).